The following is a 317-amino-acid chain: Methionyl-tRNA formyltransferase (317 aa).

A (6S)-5,6,7,8-tetrahydrofolate-binding site is contributed by 109–112 (SLLP).

Belongs to the Fmt family.

It catalyses the reaction L-methionyl-tRNA(fMet) + (6R)-10-formyltetrahydrofolate = N-formyl-L-methionyl-tRNA(fMet) + (6S)-5,6,7,8-tetrahydrofolate + H(+). Its function is as follows. Attaches a formyl group to the free amino group of methionyl-tRNA(fMet). The formyl group appears to play a dual role in the initiator identity of N-formylmethionyl-tRNA by promoting its recognition by IF2 and preventing the misappropriation of this tRNA by the elongation apparatus. The chain is Methionyl-tRNA formyltransferase from Desulforamulus reducens (strain ATCC BAA-1160 / DSM 100696 / MI-1) (Desulfotomaculum reducens).